Here is a 34-residue protein sequence, read N- to C-terminus: Photosystem II reaction center protein M (34 aa).

A helical membrane pass occupies residues I5–I25.

It belongs to the PsbM family. As to quaternary structure, PSII is composed of 1 copy each of membrane proteins PsbA, PsbB, PsbC, PsbD, PsbE, PsbF, PsbH, PsbI, PsbJ, PsbK, PsbL, PsbM, PsbT, PsbX, PsbY, PsbZ, Psb30/Ycf12, at least 3 peripheral proteins of the oxygen-evolving complex and a large number of cofactors. It forms dimeric complexes.

The protein resides in the plastid. It is found in the chloroplast thylakoid membrane. Functionally, one of the components of the core complex of photosystem II (PSII). PSII is a light-driven water:plastoquinone oxidoreductase that uses light energy to abstract electrons from H(2)O, generating O(2) and a proton gradient subsequently used for ATP formation. It consists of a core antenna complex that captures photons, and an electron transfer chain that converts photonic excitation into a charge separation. This subunit is found at the monomer-monomer interface. This Calycanthus floridus var. glaucus (Eastern sweetshrub) protein is Photosystem II reaction center protein M.